Here is a 299-residue protein sequence, read N- to C-terminus: HTH-type transcriptional regulator CrgA (299 aa).

The region spanning 1-60 is the HTH lysR-type domain; the sequence is MKTNSEELTVFVQVVESGSFSRAAEQLAMANSAVSRIVKRLEEKLGVNLLNRTTRQLSLT. A DNA-binding region (H-T-H motif) is located at residues 20-39; that stretch reads FSRAAEQLAMANSAVSRIVK.

Belongs to the LysR transcriptional regulatory family. As to quaternary structure, forms oligomers. Forms an octomeric ring-like structure in solution. May form hexadecamers when bound to target DNA.

With respect to regulation, activation and repression activities are enhanced by the addition of alpha-methylene-gamma-butyrolactone (MBL), an inducer of NADPH:quinone oxidoreductase. Functionally, regulatory protein that activates transcription of mdaB, encoding a NADPH:quinone oxidoreductase, and represses its own transcription. Under the same experimental conditions, no regulation of transcription of pilus and capsule genes is detected. This Neisseria meningitidis serogroup B (strain ATCC BAA-335 / MC58) protein is HTH-type transcriptional regulator CrgA.